A 262-amino-acid polypeptide reads, in one-letter code: Glutamate racemase (262 aa).

Substrate contacts are provided by residues 5 to 6 (DS) and 37 to 38 (YG). C69 functions as the Proton donor/acceptor in the catalytic mechanism. 70 to 71 (NT) contributes to the substrate binding site. C181 serves as the catalytic Proton donor/acceptor. 182-183 (TH) is a binding site for substrate.

It belongs to the aspartate/glutamate racemases family.

It carries out the reaction L-glutamate = D-glutamate. The protein operates within cell wall biogenesis; peptidoglycan biosynthesis. Provides the (R)-glutamate required for cell wall biosynthesis. The polypeptide is Glutamate racemase (Buchnera aphidicola subsp. Acyrthosiphon pisum (strain 5A)).